Consider the following 172-residue polypeptide: MVDKRESYTKEDLLASSRGELFGPQGPQLPAPNMLMMDRVVKMTEDGGKYGKGFVEAELDITPDQWFFGCHFIGDPVMPGCLGLDAMWQLVGFYLGWLGGEGKGRALGVGEVKFSGQVLPTAKKVTYRIHFKRVINRRLVMGIADGEVLVDGQHIYAADELKVGLFKDASSF.

H71 is an active-site residue.

This sequence belongs to the thioester dehydratase family. FabA subfamily. In terms of assembly, homodimer.

The protein resides in the cytoplasm. It carries out the reaction a (3R)-hydroxyacyl-[ACP] = a (2E)-enoyl-[ACP] + H2O. It catalyses the reaction (3R)-hydroxydecanoyl-[ACP] = (2E)-decenoyl-[ACP] + H2O. The enzyme catalyses (2E)-decenoyl-[ACP] = (3Z)-decenoyl-[ACP]. It participates in lipid metabolism; fatty acid biosynthesis. In terms of biological role, necessary for the introduction of cis unsaturation into fatty acids. Catalyzes the dehydration of (3R)-3-hydroxydecanoyl-ACP to E-(2)-decenoyl-ACP and then its isomerization to Z-(3)-decenoyl-ACP. Can catalyze the dehydratase reaction for beta-hydroxyacyl-ACPs with saturated chain lengths up to 16:0, being most active on intermediate chain length. This is 3-hydroxydecanoyl-[acyl-carrier-protein] dehydratase from Pectobacterium atrosepticum (strain SCRI 1043 / ATCC BAA-672) (Erwinia carotovora subsp. atroseptica).